The sequence spans 397 residues: Acetate kinase (397 aa).

Asparagine 7 serves as a coordination point for Mg(2+). Residue lysine 14 participates in ATP binding. Arginine 91 lines the substrate pocket. The Proton donor/acceptor role is filled by aspartate 148. Residues histidine 208–glycine 212, aspartate 283–arginine 285, and glycine 331–asparagine 335 contribute to the ATP site. Glutamate 384 is a binding site for Mg(2+).

The protein belongs to the acetokinase family. In terms of assembly, homodimer. The cofactor is Mg(2+). Requires Mn(2+) as cofactor.

It is found in the cytoplasm. The enzyme catalyses acetate + ATP = acetyl phosphate + ADP. It participates in metabolic intermediate biosynthesis; acetyl-CoA biosynthesis; acetyl-CoA from acetate: step 1/2. Functionally, catalyzes the formation of acetyl phosphate from acetate and ATP. Can also catalyze the reverse reaction. In Azobacteroides pseudotrichonymphae genomovar. CFP2, this protein is Acetate kinase.